A 300-amino-acid chain; its full sequence is GTP cyclohydrolase FolE2 (300 aa).

It belongs to the GTP cyclohydrolase IV family.

The enzyme catalyses GTP + H2O = 7,8-dihydroneopterin 3'-triphosphate + formate + H(+). It participates in cofactor biosynthesis; 7,8-dihydroneopterin triphosphate biosynthesis; 7,8-dihydroneopterin triphosphate from GTP: step 1/1. Functionally, converts GTP to 7,8-dihydroneopterin triphosphate. The polypeptide is GTP cyclohydrolase FolE2 (Bacillus licheniformis (strain ATCC 14580 / DSM 13 / JCM 2505 / CCUG 7422 / NBRC 12200 / NCIMB 9375 / NCTC 10341 / NRRL NRS-1264 / Gibson 46)).